A 371-amino-acid polypeptide reads, in one-letter code: Ecto-ADP-ribosyltransferase 3 (371 aa).

A signal peptide spans M1 to A26. C43 and C255 are disulfide-bonded. Residues A64–C250 form the TR mART core domain. NAD(+) is bound by residues Y101 and N182. The disordered stretch occupies residues V306 to S346. A lipid anchor (GPI-anchor amidated serine) is attached at S345. Residues S346–L371 constitute a propeptide, removed in mature form.

The protein belongs to the Arg-specific ADP-ribosyltransferase family.

The protein localises to the cell membrane. The catalysed reaction is L-arginyl-[protein] + NAD(+) = N(omega)-(ADP-D-ribosyl)-L-arginyl-[protein] + nicotinamide + H(+). In Mus musculus (Mouse), this protein is Ecto-ADP-ribosyltransferase 3 (Art3).